A 313-amino-acid chain; its full sequence is Porphobilinogen deaminase (313 aa).

S-(dipyrrolylmethanemethyl)cysteine is present on cysteine 241.

The protein belongs to the HMBS family. In terms of assembly, monomer. The cofactor is dipyrromethane.

The enzyme catalyses 4 porphobilinogen + H2O = hydroxymethylbilane + 4 NH4(+). It functions in the pathway porphyrin-containing compound metabolism; protoporphyrin-IX biosynthesis; coproporphyrinogen-III from 5-aminolevulinate: step 2/4. It participates in porphyrin-containing compound metabolism; chlorophyll biosynthesis. In terms of biological role, tetrapolymerization of the monopyrrole PBG into the hydroxymethylbilane pre-uroporphyrinogen in several discrete steps. The chain is Porphobilinogen deaminase from Chlorobium phaeovibrioides (strain DSM 265 / 1930) (Prosthecochloris vibrioformis (strain DSM 265)).